A 164-amino-acid chain; its full sequence is Transcription elongation factor GreA (164 aa).

Residues 12–38 (RRLERELERLKKERPGVILAIKEAREE) adopt a coiled-coil conformation.

Belongs to the GreA/GreB family.

In terms of biological role, necessary for efficient RNA polymerase transcription elongation past template-encoded arresting sites. The arresting sites in DNA have the property of trapping a certain fraction of elongating RNA polymerases that pass through, resulting in locked ternary complexes. Cleavage of the nascent transcript by cleavage factors such as GreA or GreB allows the resumption of elongation from the new 3'terminus. GreA releases sequences of 2 to 3 nucleotides. This Solidesulfovibrio magneticus (strain ATCC 700980 / DSM 13731 / RS-1) (Desulfovibrio magneticus) protein is Transcription elongation factor GreA.